The chain runs to 180 residues: UPF0227 protein YcfP (180 aa).

Belongs to the UPF0227 family.

The polypeptide is UPF0227 protein YcfP (Salmonella choleraesuis (strain SC-B67)).